A 361-amino-acid polypeptide reads, in one-letter code: Holliday junction branch migration complex subunit RuvB (361 aa).

Basic and acidic residues-rich tracts occupy residues 1 to 13 and 33 to 43; these read MSDV…KLPE and QGEHDIERSLR. The tract at residues 1–43 is disordered; it reads MSDVERTEFKLPEGMDLSSPPQRNQDVDAAEQQGEHDIERSLR. The large ATPase domain (RuvB-L) stretch occupies residues 2–203; that stretch reads SDVERTEFKL…FGFTAQMEYY (202 aa). ATP contacts are provided by residues Leu42, Arg43, Gly84, Lys87, Thr88, Thr89, 150 to 152, Arg193, Tyr203, and Arg240; that span reads EDF. Thr88 provides a ligand contact to Mg(2+). The small ATPAse domain (RuvB-S) stretch occupies residues 204–274; sequence DTEDLTRVIS…AAQAALRVFD (71 aa). Positions 277–361 are head domain (RuvB-H); it reads ERGLDRLDRA…PEGAIGGTLF (85 aa). Residues Arg332 and Arg337 each contribute to the DNA site.

This sequence belongs to the RuvB family. Homohexamer. Forms an RuvA(8)-RuvB(12)-Holliday junction (HJ) complex. HJ DNA is sandwiched between 2 RuvA tetramers; dsDNA enters through RuvA and exits via RuvB. An RuvB hexamer assembles on each DNA strand where it exits the tetramer. Each RuvB hexamer is contacted by two RuvA subunits (via domain III) on 2 adjacent RuvB subunits; this complex drives branch migration. In the full resolvosome a probable DNA-RuvA(4)-RuvB(12)-RuvC(2) complex forms which resolves the HJ.

The protein resides in the cytoplasm. It carries out the reaction ATP + H2O = ADP + phosphate + H(+). Functionally, the RuvA-RuvB-RuvC complex processes Holliday junction (HJ) DNA during genetic recombination and DNA repair, while the RuvA-RuvB complex plays an important role in the rescue of blocked DNA replication forks via replication fork reversal (RFR). RuvA specifically binds to HJ cruciform DNA, conferring on it an open structure. The RuvB hexamer acts as an ATP-dependent pump, pulling dsDNA into and through the RuvAB complex. RuvB forms 2 homohexamers on either side of HJ DNA bound by 1 or 2 RuvA tetramers; 4 subunits per hexamer contact DNA at a time. Coordinated motions by a converter formed by DNA-disengaged RuvB subunits stimulates ATP hydrolysis and nucleotide exchange. Immobilization of the converter enables RuvB to convert the ATP-contained energy into a lever motion, pulling 2 nucleotides of DNA out of the RuvA tetramer per ATP hydrolyzed, thus driving DNA branch migration. The RuvB motors rotate together with the DNA substrate, which together with the progressing nucleotide cycle form the mechanistic basis for DNA recombination by continuous HJ branch migration. Branch migration allows RuvC to scan DNA until it finds its consensus sequence, where it cleaves and resolves cruciform DNA. The protein is Holliday junction branch migration complex subunit RuvB of Corynebacterium aurimucosum (strain ATCC 700975 / DSM 44827 / CIP 107346 / CN-1) (Corynebacterium nigricans).